Here is a 64-residue protein sequence, read N- to C-terminus: Large ribosomal subunit protein bL35 (64 aa).

The segment at 19–44 (TGKLKASRPGRRHKLTGKTPKRKRQL) is disordered. Residues 23–44 (KASRPGRRHKLTGKTPKRKRQL) show a composition bias toward basic residues.

The protein belongs to the bacterial ribosomal protein bL35 family.

The polypeptide is Large ribosomal subunit protein bL35 (Protochlamydia amoebophila (strain UWE25)).